A 206-amino-acid polypeptide reads, in one-letter code: MKVVAFERSLQGTGASRRLRNSGKTPGIVYGAGAETQLVELDHNALWHALKKEVFHSSILDLEVAGKSQQVLLRDVQYHPFRQLVLHVDFQRVDAKKKLHTKVPLHFMNQESNPAVKLSSAVISHVINEIEIECLPSALPEFLEVDLATIEAGHSVHAKDIKLPAGVSLVAHVEAENPVVAAATIPAGAIAEGDAAAAGEGETPAA.

This sequence belongs to the bacterial ribosomal protein bL25 family. CTC subfamily. In terms of assembly, part of the 50S ribosomal subunit; part of the 5S rRNA/L5/L18/L25 subcomplex. Contacts the 5S rRNA. Binds to the 5S rRNA independently of L5 and L18.

Functionally, this is one of the proteins that binds to the 5S RNA in the ribosome where it forms part of the central protuberance. The protein is Large ribosomal subunit protein bL25 of Paraburkholderia phytofirmans (strain DSM 17436 / LMG 22146 / PsJN) (Burkholderia phytofirmans).